Here is an 826-residue protein sequence, read N- to C-terminus: Ubiquitin carboxyl-terminal hydrolase 16 (826 aa).

The UBP-type zinc finger occupies 22–142 (PMCRHIRKGL…QVVDYVRKQA (121 aa)). Residues Cys-24, His-26, Cys-48, Cys-51, Cys-74, Cys-77, Cys-82, His-90, His-94, His-103, Cys-116, and Cys-119 each contribute to the Zn(2+) site. Lys-140 participates in a covalent cross-link: Glycyl lysine isopeptide (Lys-Gly) (interchain with G-Cter in SUMO2). A disordered region spans residues 146–190 (TPKPAEKDNGNIELENKKLEKESKNEQEREKKENMAKENPPMNSP). Basic and acidic residues predominate over residues 149 to 181 (PAEKDNGNIELENKKLEKESKNEQEREKKENMA). Ser-189 bears the Phosphoserine mark. The 630-residue stretch at 196–825 (KGLSNLGNTC…QAYLLFYERI (630 aa)) folds into the USP domain. Cys-205 (nucleophile) is an active-site residue. A compositionally biased stretch (basic and acidic residues) spans 394 to 408 (SGKKSVNDKNLKKTM). Residues 394-460 (SGKKSVNDKN…AKNQRRQQKI (67 aa)) are disordered. A compositionally biased stretch (acidic residues) spans 409-420 (EDEDQDSEEEKD). Ser-415 bears the Phosphoserine mark. Residues 421–430 (NDSYIKERSD) are compositionally biased toward basic and acidic residues. The segment covering 438–458 (HLQKKAKKQAKKQAKNQRRQQ) has biased composition (basic residues). Position 552 is a phosphoserine (Ser-552). Thr-557 is modified (phosphothreonine). The active-site Proton acceptor is His-761.

It belongs to the peptidase C19 family. USP16 subfamily. As to quaternary structure, homotetramer. Associates with late pre-40S ribosomes. Interacts with CEP78; promoting deubiquitination of tektins. In terms of processing, phosphorylated at the onset of mitosis and dephosphorylated during the metaphase/anaphase transition. Phosphorylation by AURKB enhances the deubiquitinase activity.

The protein localises to the nucleus. It catalyses the reaction Thiol-dependent hydrolysis of ester, thioester, amide, peptide and isopeptide bonds formed by the C-terminal Gly of ubiquitin (a 76-residue protein attached to proteins as an intracellular targeting signal).. Functionally, specifically deubiquitinates 'Lys-120' of histone H2A (H2AK119Ub), a specific tag for epigenetic transcriptional repression, thereby acting as a coactivator. Deubiquitination of histone H2A is a prerequisite for subsequent phosphorylation at 'Ser-11' of histone H3 (H3S10ph), and is required for chromosome segregation when cells enter into mitosis. In resting B- and T-lymphocytes, phosphorylation by AURKB leads to enhance its activity, thereby maintaining transcription in resting lymphocytes. Regulates Hox gene expression via histone H2A deubiquitination. Prefers nucleosomal substrates. Does not deubiquitinate histone H2B. Also deubiquitinates non-histone proteins, such as ribosomal protein RPS27A: deubiquitination of monoubiquitinated RPS27A promotes maturation of the 40S ribosomal subunit. Also mediates deubiquitination of tektin proteins (TEKT1, TEKT2, TEK3, TEKT4 and TEKT5), promoting their stability. The polypeptide is Ubiquitin carboxyl-terminal hydrolase 16 (Macaca fascicularis (Crab-eating macaque)).